The following is a 183-amino-acid chain: Capsid protein (183 aa).

A disordered region spans residues 136 to 183; the sequence is NAPILSTLPETTVVRRRGRSPRRRTPSPRRRRSQSPRRRRSQSRESQC. Positions 149 to 176 are enriched in basic residues; that stretch reads VRRRGRSPRRRTPSPRRRRSQSPRRRRS. Residues Ser155, Ser162, and Ser170 each carry the phosphoserine; by host modification. A 1; half-length repeat occupies 155–161; sequence SPRRRTP. Residues 155–177 form a 3 X 8 AA repeats of S-P-R-R-R-[PR]-S-Q region; the sequence is SPRRRTPSPRRRRSQSPRRRRSQ. A Bipartite nuclear localization signal motif is present at residues 158–175; it reads RRTPSPRRRRSQSPRRRR. Tandem repeats lie at residues 162–169 and 170–177. An RNA binding region spans residues 177–183; it reads QSRESQC.

Belongs to the orthohepadnavirus core antigen family. As to quaternary structure, homodimerizes, then multimerizes. Interacts with cytosol exposed regions of viral L glycoprotein present in the reticulum-to-Golgi compartment. Interacts with human FLNB. Phosphorylated form interacts with host importin alpha; this interaction depends on the exposure of the NLS, which itself depends upon genome maturation and/or phosphorylation of the capsid protein. Interacts with host NUP153. Phosphorylated by host SRPK1, SRPK2, and maybe protein kinase C or GAPDH. Phosphorylation is critical for pregenomic RNA packaging. Protein kinase C phosphorylation is stimulated by HBx protein and may play a role in transport of the viral genome to the nucleus at the late step during the viral replication cycle.

Its subcellular location is the virion. The protein localises to the host cytoplasm. Functionally, self assembles to form an icosahedral capsid. Most capsids appear to be large particles with an icosahedral symmetry of T=4 and consist of 240 copies of capsid protein, though a fraction forms smaller T=3 particles consisting of 180 capsid proteins. Entering capsids are transported along microtubules to the nucleus. Phosphorylation of the capsid is thought to induce exposure of nuclear localization signal in the C-terminal portion of the capsid protein that allows binding to the nuclear pore complex via the importin (karyopherin-) alpha and beta. Capsids are imported in intact form through the nuclear pore into the nuclear basket, where it probably binds NUP153. Only capsids that contain the mature viral genome can release the viral DNA and capsid protein into the nucleoplasm. Immature capsids get stuck in the basket. Capsids encapsulate the pre-genomic RNA and the P protein. Pre-genomic RNA is reverse-transcribed into DNA while the capsid is still in the cytoplasm. The capsid can then either be directed to the nucleus, providing more genomes for transcription, or bud through the endoplasmic reticulum to provide new virions. This is Capsid protein from Homo sapiens (Human).